Reading from the N-terminus, the 671-residue chain is DNA ligase (671 aa).

Residues 31 to 35, 80 to 81, and Glu-110 contribute to the NAD(+) site; these read DAEYD and SL. Lys-112 functions as the N6-AMP-lysine intermediate in the catalytic mechanism. The NAD(+) site is built by Arg-133, Glu-167, Lys-283, and Lys-307. 4 residues coordinate Zn(2+): Cys-401, Cys-404, Cys-419, and Cys-424. The BRCT domain maps to 587–671; it reads EEELVFAGKT…YLPDEGGLNE (85 aa).

It belongs to the NAD-dependent DNA ligase family. LigA subfamily. Mg(2+) is required as a cofactor. Mn(2+) serves as cofactor.

The enzyme catalyses NAD(+) + (deoxyribonucleotide)n-3'-hydroxyl + 5'-phospho-(deoxyribonucleotide)m = (deoxyribonucleotide)n+m + AMP + beta-nicotinamide D-nucleotide.. In terms of biological role, DNA ligase that catalyzes the formation of phosphodiester linkages between 5'-phosphoryl and 3'-hydroxyl groups in double-stranded DNA using NAD as a coenzyme and as the energy source for the reaction. It is essential for DNA replication and repair of damaged DNA. This chain is DNA ligase, found in Listeria monocytogenes serotype 4b (strain CLIP80459).